Here is an 83-residue protein sequence, read N- to C-terminus: Three-finger toxin MALT0058C (83 aa).

The signal sequence occupies residues 1-21; sequence MKTLLLTLVVVTIVCLDFGHT. 4 cysteine pairs are disulfide-bonded: Cys-24-Cys-45, Cys-38-Cys-62, Cys-64-Cys-75, and Cys-76-Cys-81.

The protein belongs to the three-finger toxin family. Short-chain subfamily. Type I alpha-neurotoxin sub-subfamily. In terms of tissue distribution, expressed by the venom gland.

The protein localises to the secreted. Its function is as follows. Binds to muscle nicotinic acetylcholine receptor (nAChR) and inhibits acetylcholine from binding to the receptor, thereby impairing neuromuscular transmission. This Micrurus altirostris (Uruguayan coral snake) protein is Three-finger toxin MALT0058C.